The following is a 133-amino-acid chain: Phosphomevalonate dehydratase small subunit (133 aa).

Serine 62 acts as the Proton acceptor in catalysis.

This sequence belongs to the AcnX type II small subunit family. In terms of assembly, heterodimer composed of a large subunit (PMDh-L) and a small subunit (PMDh-S).

The enzyme catalyses (R)-5-phosphomevalonate = (2E)-3-methyl-5-phosphooxypent-2-enoate + H2O. It functions in the pathway isoprenoid biosynthesis; isopentenyl diphosphate biosynthesis via mevalonate pathway. Component of a hydro-lyase that catalyzes the dehydration of mevalonate 5-phosphate (MVA5P) to form trans-anhydromevalonate 5-phosphate (tAHMP). Involved in the archaeal mevalonate (MVA) pathway, which provides fundamental precursors for isoprenoid biosynthesis, such as isopentenyl diphosphate (IPP) and dimethylallyl diphosphate (DMAPP). In Thermococcus kodakarensis (strain ATCC BAA-918 / JCM 12380 / KOD1) (Pyrococcus kodakaraensis (strain KOD1)), this protein is Phosphomevalonate dehydratase small subunit.